The chain runs to 143 residues: Large ribosomal subunit protein uL11 (143 aa).

Belongs to the universal ribosomal protein uL11 family. Part of the ribosomal stalk of the 50S ribosomal subunit. Interacts with L10 and the large rRNA to form the base of the stalk. L10 forms an elongated spine to which L12 dimers bind in a sequential fashion forming a multimeric L10(L12)X complex. One or more lysine residues are methylated.

Forms part of the ribosomal stalk which helps the ribosome interact with GTP-bound translation factors. This chain is Large ribosomal subunit protein uL11, found in Novosphingobium aromaticivorans (strain ATCC 700278 / DSM 12444 / CCUG 56034 / CIP 105152 / NBRC 16084 / F199).